Consider the following 435-residue polypeptide: Nicotinate phosphoribosyltransferase (435 aa).

His230 carries the phosphohistidine; by autocatalysis modification.

The protein belongs to the NAPRTase family. Post-translationally, transiently phosphorylated on a His residue during the reaction cycle. Phosphorylation strongly increases the affinity for substrates and increases the rate of nicotinate D-ribonucleotide production. Dephosphorylation regenerates the low-affinity form of the enzyme, leading to product release.

The enzyme catalyses nicotinate + 5-phospho-alpha-D-ribose 1-diphosphate + ATP + H2O = nicotinate beta-D-ribonucleotide + ADP + phosphate + diphosphate. It participates in cofactor biosynthesis; NAD(+) biosynthesis; nicotinate D-ribonucleotide from nicotinate: step 1/1. Catalyzes the synthesis of beta-nicotinate D-ribonucleotide from nicotinate and 5-phospho-D-ribose 1-phosphate at the expense of ATP. This Vibrio cholerae serotype O1 (strain ATCC 39541 / Classical Ogawa 395 / O395) protein is Nicotinate phosphoribosyltransferase.